A 188-amino-acid chain; its full sequence is Elongation factor P (188 aa).

Lys34 carries the N6-(3,6-diaminohexanoyl)-5-hydroxylysine modification.

The protein belongs to the elongation factor P family. In terms of processing, may be beta-lysylated on the epsilon-amino group of Lys-34 by the combined action of EpmA and EpmB, and then hydroxylated on the C5 position of the same residue by EpmC (if this protein is present). Lysylation is critical for the stimulatory effect of EF-P on peptide-bond formation. The lysylation moiety may extend toward the peptidyltransferase center and stabilize the terminal 3-CCA end of the tRNA. Hydroxylation of the C5 position on Lys-34 may allow additional potential stabilizing hydrogen-bond interactions with the P-tRNA.

It is found in the cytoplasm. It participates in protein biosynthesis; polypeptide chain elongation. Its function is as follows. Involved in peptide bond synthesis. Alleviates ribosome stalling that occurs when 3 or more consecutive Pro residues or the sequence PPG is present in a protein, possibly by augmenting the peptidyl transferase activity of the ribosome. Modification of Lys-34 is required for alleviation. The protein is Elongation factor P of Photorhabdus laumondii subsp. laumondii (strain DSM 15139 / CIP 105565 / TT01) (Photorhabdus luminescens subsp. laumondii).